A 96-amino-acid polypeptide reads, in one-letter code: MIDREQVRKVALLARLELTPEEEEQFTTQLGSILDYVEQLNELDVSNVPPTARAIDVSNITREDNLQPYADREAILSSAPEQEGEFFKVPKILNAE.

Belongs to the GatC family. Heterotrimer of A, B and C subunits.

The catalysed reaction is L-glutamyl-tRNA(Gln) + L-glutamine + ATP + H2O = L-glutaminyl-tRNA(Gln) + L-glutamate + ADP + phosphate + H(+). The enzyme catalyses L-aspartyl-tRNA(Asn) + L-glutamine + ATP + H2O = L-asparaginyl-tRNA(Asn) + L-glutamate + ADP + phosphate + 2 H(+). Allows the formation of correctly charged Asn-tRNA(Asn) or Gln-tRNA(Gln) through the transamidation of misacylated Asp-tRNA(Asn) or Glu-tRNA(Gln) in organisms which lack either or both of asparaginyl-tRNA or glutaminyl-tRNA synthetases. The reaction takes place in the presence of glutamine and ATP through an activated phospho-Asp-tRNA(Asn) or phospho-Glu-tRNA(Gln). This Nostoc sp. (strain PCC 7120 / SAG 25.82 / UTEX 2576) protein is Glutamyl-tRNA(Gln) amidotransferase subunit C.